The following is a 95-amino-acid chain: Costars family protein WS02710_H03 (95 aa).

This sequence belongs to the costars family.

The chain is Costars family protein WS02710_H03 from Picea sitchensis (Sitka spruce).